The sequence spans 609 residues: UvrABC system protein C (609 aa).

In terms of domain architecture, GIY-YIG spans 16–94; that stretch reads SSPGVYRMYD…IKQYMPKYNV (79 aa). In terms of domain architecture, UVR spans 203–238; it reads HQVMSVLVGKMEQAASDMRYEQAALYRDQITALRRV.

This sequence belongs to the UvrC family. Interacts with UvrB in an incision complex.

Its subcellular location is the cytoplasm. In terms of biological role, the UvrABC repair system catalyzes the recognition and processing of DNA lesions. UvrC both incises the 5' and 3' sides of the lesion. The N-terminal half is responsible for the 3' incision and the C-terminal half is responsible for the 5' incision. This chain is UvrABC system protein C, found in Shewanella halifaxensis (strain HAW-EB4).